A 140-amino-acid polypeptide reads, in one-letter code: 6,7-dimethyl-8-ribityllumazine synthase (140 aa).

5-amino-6-(D-ribitylamino)uracil-binding positions include Phe-11, 42-44 (ALE), and 66-68 (VVI). 71-72 (ET) is a binding site for (2S)-2-hydroxy-3-oxobutyl phosphate. His-74 functions as the Proton donor in the catalytic mechanism. Asn-98 serves as a coordination point for 5-amino-6-(D-ribitylamino)uracil. Arg-112 contacts (2S)-2-hydroxy-3-oxobutyl phosphate.

It belongs to the DMRL synthase family.

The enzyme catalyses (2S)-2-hydroxy-3-oxobutyl phosphate + 5-amino-6-(D-ribitylamino)uracil = 6,7-dimethyl-8-(1-D-ribityl)lumazine + phosphate + 2 H2O + H(+). The protein operates within cofactor biosynthesis; riboflavin biosynthesis; riboflavin from 2-hydroxy-3-oxobutyl phosphate and 5-amino-6-(D-ribitylamino)uracil: step 1/2. Functionally, catalyzes the formation of 6,7-dimethyl-8-ribityllumazine by condensation of 5-amino-6-(D-ribitylamino)uracil with 3,4-dihydroxy-2-butanone 4-phosphate. This is the penultimate step in the biosynthesis of riboflavin. The protein is 6,7-dimethyl-8-ribityllumazine synthase of Erythrobacter litoralis (strain HTCC2594).